The following is a 220-amino-acid chain: Fructose-6-phosphate aldolase 1 (220 aa).

Residue lysine 85 is the Schiff-base intermediate with substrate of the active site.

It belongs to the transaldolase family. Type 3A subfamily. As to quaternary structure, homodecamer.

It is found in the cytoplasm. The enzyme catalyses beta-D-fructose 6-phosphate = dihydroxyacetone + D-glyceraldehyde 3-phosphate. In terms of biological role, catalyzes the reversible formation of fructose 6-phosphate from dihydroxyacetone and D-glyceraldehyde 3-phosphate via an aldolization reaction. In Escherichia coli O157:H7, this protein is Fructose-6-phosphate aldolase 1 (fsaA).